The following is a 91-amino-acid chain: Elongation factor 1-beta (91 aa).

The protein belongs to the EF-1-beta/EF-1-delta family.

In terms of biological role, promotes the exchange of GDP for GTP in EF-1-alpha/GDP, thus allowing the regeneration of EF-1-alpha/GTP that could then be used to form the ternary complex EF-1-alpha/GTP/AAtRNA. The chain is Elongation factor 1-beta from Thermococcus gammatolerans (strain DSM 15229 / JCM 11827 / EJ3).